Here is a 418-residue protein sequence, read N- to C-terminus: MQPTDPLEEARAQLRRAVDLLGYDDYVYEVLANPDRVLQVRVTIKMDDGTVKTFLGWRSQHNSALGPYKGGVRYHPNVTMNEVIALSMWMTWKNSLAGLPYGGGKGGVRVNPKILSPRELELLSRKYFESISDIVGVDQDIPAPDVYTDPQVMSWFLDEYNRVKRGQFFGVVTGKPVELGGLNARIVSTGYGVAVSTRVAAEKFLGGLEGRTVAVQGYGNVGYYAAKFLAEMGAKIVAVSDSRGGIYDPEGIDPEEALKVKRSTGTVANYQRGKKISTMEILELPVDILVPAAIEEVITDENADRIKAKIISEGANGPTTTAAEKILVKKGVLVLPDILANAGGVIMSHIEWVNNRMGGWITDEEALKKLEQKMVENTKTVITYWEKNLKPEENSLRDAAYMIAVERVFRAMKLRGWI.

Lys-105 is an active-site residue. Residue 217–223 (GYGNVGY) participates in NAD(+) binding.

It belongs to the Glu/Leu/Phe/Val dehydrogenases family. As to quaternary structure, homohexamer.

It localises to the cytoplasm. The catalysed reaction is L-glutamate + NAD(+) + H2O = 2-oxoglutarate + NH4(+) + NADH + H(+). It catalyses the reaction L-glutamate + NADP(+) + H2O = 2-oxoglutarate + NH4(+) + NADPH + H(+). The sequence is that of Glutamate dehydrogenase (gdhA) from Aeropyrum pernix (strain ATCC 700893 / DSM 11879 / JCM 9820 / NBRC 100138 / K1).